Consider the following 447-residue polypeptide: Argininosuccinate synthase (447 aa).

ATP-binding positions include 17–25 and alanine 43; that span reads AFSGGLDTS. Tyrosine 99 provides a ligand contact to L-citrulline. Residues glycine 129 and threonine 131 each coordinate ATP. L-aspartate is bound by residues threonine 131, asparagine 135, and aspartate 136. An L-citrulline-binding site is contributed by asparagine 135. Aspartate 136 contributes to the ATP binding site. The L-citrulline site is built by arginine 139 and serine 192. An ATP-binding site is contributed by aspartate 194. Positions 201, 203, and 280 each coordinate L-citrulline.

The protein belongs to the argininosuccinate synthase family. Type 2 subfamily. Homotetramer.

It is found in the cytoplasm. The enzyme catalyses L-citrulline + L-aspartate + ATP = 2-(N(omega)-L-arginino)succinate + AMP + diphosphate + H(+). It functions in the pathway amino-acid biosynthesis; L-arginine biosynthesis; L-arginine from L-ornithine and carbamoyl phosphate: step 2/3. This is Argininosuccinate synthase from Escherichia coli O1:K1 / APEC.